The following is a 155-amino-acid chain: Small ribosomal subunit protein uS7c (155 aa).

Belongs to the universal ribosomal protein uS7 family. Part of the 30S ribosomal subunit.

The protein localises to the plastid. It localises to the chloroplast. One of the primary rRNA binding proteins, it binds directly to 16S rRNA where it nucleates assembly of the head domain of the 30S subunit. The sequence is that of Small ribosomal subunit protein uS7c (rps7) from Cabomba caroliniana (Carolina fanwort).